The sequence spans 419 residues: Transcription termination factor Rho (419 aa).

The 76-residue stretch at 48-123 (DIFGDGVLEI…LKVNEVNYDK (76 aa)) folds into the Rho RNA-BD domain. 3 RNA-binding regions span residues 61 to 66 (GFGFLR), 78 to 80 (DIY), and 108 to 110 (ERY). ATP contacts are provided by residues 169–174 (GRGQRG), 181–186 (KAGKTM), and R212. The interval 284–288 (VLTGG) is RNA-binding 2.

It belongs to the Rho family. Homohexamer. The homohexamer assembles into an open ring structure.

Facilitates transcription termination by a mechanism that involves Rho binding to the nascent RNA, activation of Rho's RNA-dependent ATPase activity, and release of the mRNA from the DNA template. In Salmonella typhi, this protein is Transcription termination factor Rho.